We begin with the raw amino-acid sequence, 428 residues long: Adenylosuccinate synthetase (428 aa).

GTP is bound by residues 12 to 18 (GDEGKGK) and 40 to 42 (GHT). Asp-13 (proton acceptor) is an active-site residue. Mg(2+) contacts are provided by Asp-13 and Gly-40. IMP contacts are provided by residues 13–16 (DEGK), 38–41 (NAGH), Thr-129, Arg-143, Gln-224, Thr-239, and Arg-303. Residue His-41 is the Proton donor of the active site. 299-305 (VTTGRIR) lines the substrate pocket. GTP-binding positions include Arg-305, 331 to 333 (KVD), and 410 to 412 (AYG).

It belongs to the adenylosuccinate synthetase family. As to quaternary structure, homodimer. It depends on Mg(2+) as a cofactor.

It localises to the cytoplasm. The enzyme catalyses IMP + L-aspartate + GTP = N(6)-(1,2-dicarboxyethyl)-AMP + GDP + phosphate + 2 H(+). It participates in purine metabolism; AMP biosynthesis via de novo pathway; AMP from IMP: step 1/2. Its function is as follows. Plays an important role in the de novo pathway of purine nucleotide biosynthesis. Catalyzes the first committed step in the biosynthesis of AMP from IMP. This chain is Adenylosuccinate synthetase, found in Francisella tularensis subsp. mediasiatica (strain FSC147).